The following is a 349-amino-acid chain: Protein RecA (349 aa).

65–72 serves as a coordination point for ATP; it reads GPESSGKT. The disordered stretch occupies residues 329–349; the sequence is KASDQTAAHDETEEEPDLLES. Residues 339–349 show a composition bias toward acidic residues; sequence ETEEEPDLLES.

This sequence belongs to the RecA family.

It localises to the cytoplasm. Its function is as follows. Can catalyze the hydrolysis of ATP in the presence of single-stranded DNA, the ATP-dependent uptake of single-stranded DNA by duplex DNA, and the ATP-dependent hybridization of homologous single-stranded DNAs. It interacts with LexA causing its activation and leading to its autocatalytic cleavage. This chain is Protein RecA, found in Acinetobacter baylyi (strain ATCC 33305 / BD413 / ADP1).